Consider the following 152-residue polypeptide: Neuropeptide W (152 aa).

An N-terminal signal peptide occupies residues 1-32 (MGARGPGPGATARRRLLALLLLLLLLPLPARA). A propeptide spanning residues 65–152 (ALRPAAGPLA…LGASSWTSAE (88 aa)) is cleaved from the precursor. Disordered stretches follow at residues 79–108 (GQDV…LPPG) and 122–152 (SGIP…TSAE). Pro residues predominate over residues 96–106 (GPAPRDAPLLP).

This sequence belongs to the neuropeptide B/W family.

The protein localises to the secreted. Its function is as follows. Plays a regulatory role in the organization of neuroendocrine signals accessing the anterior pituitary gland. Stimulates water drinking and food intake. May play a role in the hypothalamic response to stress. The polypeptide is Neuropeptide W (NPW) (Sus scrofa (Pig)).